A 454-amino-acid chain; its full sequence is Guanine deaminase (454 aa).

H82 and H84 together coordinate Zn(2+). Substrate is bound by residues 84 to 87 (HAPQ), 213 to 214 (RF), 240 to 243 (HISE), and D330. Zn(2+) contacts are provided by H240 and D330. S453 is subject to Phosphoserine.

It belongs to the metallo-dependent hydrolases superfamily. ATZ/TRZ family. In terms of assembly, homodimer. Zn(2+) is required as a cofactor.

The catalysed reaction is guanine + H2O + H(+) = xanthine + NH4(+). It functions in the pathway purine metabolism; guanine degradation; xanthine from guanine: step 1/1. Its function is as follows. Catalyzes the hydrolytic deamination of guanine, producing xanthine and ammonia. This Rattus norvegicus (Rat) protein is Guanine deaminase (Gda).